The chain runs to 309 residues: Formate-nitrite transporter (309 aa).

Residues 1-19 (MPPNNSKYVLDPVSIKSVC) lie on the Cytoplasmic side of the membrane. Positions 20–35 (GGEESYIRCVEYGKKK) form an intramembrane region, helical. Residues 36–40 (AHYSN) lie on the Cytoplasmic side of the membrane. The chain crosses the membrane as a helical span at residues 41 to 68 (LNLLAKAILAGMFVGLCAHASGIAGGLF). At 69–79 (YYHKLREIVGA) the chain is on the extracellular side. Residues 80–100 (SMSVFVYGFTFPIAFMCIICT) form a helical membrane-spanning segment. The Cytoplasmic segment spans residues 101-122 (GSDLFTGNTLAVTMALYEKKVK). A helical membrane pass occupies residues 123-150 (LLDYLRVMTISLFGNYVGAVSFAFFVSY). Residues 151–163 (LSGAFTNVHAVEK) lie on the Extracellular side of the membrane. The segment at residues 164–179 (NHFFQFLNDIAEKKVH) is an intramembrane region (helical). Residues 180-181 (HT) are Extracellular-facing. The helical transmembrane segment at 182–206 (FVECVSLAVGCNIFVCLAVYFVLTL) threads the bilayer. Over 207–209 (KDG) the chain is Cytoplasmic. The chain crosses the membrane as a helical span at residues 210 to 226 (AGYVFSVFFAVYAFAIA). The Extracellular segment spans residues 227–249 (GYEHIIANIYTLNIALMVNTKIT). The chain crosses the membrane as a helical span at residues 250–280 (VYQAYIKNLLPTLLGNYIAGAIVLGLPLYFI). Residues 281-309 (YKEHYYNFERSKRDNNDAQMKSLSIELRN) are Cytoplasmic-facing.

Belongs to the FNT transporter (TC 1.A.16) family. Homopentamer.

It localises to the cell membrane. Its subcellular location is the vacuole membrane. The catalysed reaction is (S)-lactate(in) + H(+)(in) = (S)-lactate(out) + H(+)(out). It catalyses the reaction formate(in) + H(+)(in) = formate(out) + H(+)(out). It carries out the reaction pyruvate(out) + H(+)(out) = pyruvate(in) + H(+)(in). The enzyme catalyses acetate(out) + H(+)(out) = acetate(in) + H(+)(in). With respect to regulation, inhibited by diethylpyrocarbonate (DEPC). Protonophores, such as 2,4-dinitrophenol and carbonylcyanide-3-chlorophenylhydrazone, abolish transport. Inhibited by phloretin, furosemide, alpha-cyano-4-hydroxy-cinnamate and alpha-fluorocinnamate. Inhibited by the Malaria Box compound MMV007839 and its derivatives BH296 and BH267.meta. Inhibited by the Malaria Box compound MMV000972. Inhibited by broad-specificity anion transport inhibitor NPPB. Its function is as follows. Monocarboxylate-proton symporter that mediates the efflux of the waste product lactate in the intraerythrocytic parasites; active in acidic-to-neutral pH range. Transports L-lactate. Transports D-lactate, pyruvate, acetate and formate. Essential for asexual growth but dispensable for the development of gametocytes. The polypeptide is Formate-nitrite transporter (Plasmodium falciparum (isolate 3D7)).